A 152-amino-acid chain; its full sequence is Ribonuclease HI (152 aa).

The RNase H type-1 domain occupies 1–142 (MDSKVVIYTD…ADKLAVQGRE (142 aa)). The Mg(2+) site is built by aspartate 10, glutamate 48, aspartate 70, and aspartate 134.

It belongs to the RNase H family. In terms of assembly, monomer. Mg(2+) is required as a cofactor.

It localises to the cytoplasm. The catalysed reaction is Endonucleolytic cleavage to 5'-phosphomonoester.. In terms of biological role, endonuclease that specifically degrades the RNA of RNA-DNA hybrids. The polypeptide is Ribonuclease HI (Rickettsia conorii (strain ATCC VR-613 / Malish 7)).